A 142-amino-acid polypeptide reads, in one-letter code: Large ribosomal subunit protein uL11 (142 aa).

The protein belongs to the universal ribosomal protein uL11 family. In terms of assembly, part of the ribosomal stalk of the 50S ribosomal subunit. Interacts with L10 and the large rRNA to form the base of the stalk. L10 forms an elongated spine to which L12 dimers bind in a sequential fashion forming a multimeric L10(L12)X complex. Post-translationally, one or more lysine residues are methylated.

Functionally, forms part of the ribosomal stalk which helps the ribosome interact with GTP-bound translation factors. The polypeptide is Large ribosomal subunit protein uL11 (Mycoplasma capricolum subsp. capricolum (strain California kid / ATCC 27343 / NCTC 10154)).